Here is a 987-residue protein sequence, read N- to C-terminus: Collagen alpha-1(I) chain (987 aa).

Residues 1 to 21 (SVPGPMGPSGPRGLPGPPGPG) are compositionally biased toward pro residues. Residues 1–987 (SVPGPMGPSG…PGPPGPPGPP (987 aa)) are disordered. Residues Pro-15, Pro-18, Pro-20, Pro-29, Pro-32, Pro-35, Pro-50, Pro-65, Pro-71, Pro-80, and Pro-86 each carry the 4-hydroxyproline modification. A compositionally biased stretch (low complexity) spans 23–41 (QGFQGPPGEPGEPGSSGPM). The span at 53–67 (NGDDGEAGKPGRPGE) shows a compositional bias: basic and acidic residues. Lys-89 carries the post-translational modification 5-hydroxylysine; alternate. O-linked (Gal...) hydroxylysine; alternate glycosylation occurs at Lys-89. Ser-95 carries the phosphoserine modification. The span at 103–119 (DAGPAGPKGEPGSPGEN) shows a compositional bias: low complexity. A 4-hydroxyproline mark is found at Pro-113, Pro-116, Pro-122, Pro-131, Pro-137, Pro-158, Pro-167, Pro-170, Pro-197, Pro-200, Pro-212, Pro-218, Pro-227, Pro-233, Pro-236, and Pro-251. Residues 137 to 155 (PGASGPAGARGNDGAAGAA) show a composition bias toward low complexity. Over residues 157–169 (PPGPTGPAGPPGF) the composition is skewed to pro residues. The segment covering 203–253 (AGAAGPAGNPGADGQPGAKGANGAPGIAGAPGFPGARGPSGPQGPSGAPGP) has biased composition (low complexity). At Lys-254 the chain carries 5-hydroxylysine. 4-hydroxyproline occurs at positions 260, 263, 275, 284, 299, 305, 314, and 320. Gly residues predominate over residues 309-318 (GERGGPGSRG). At Lys-329 the chain carries 5-hydroxylysine. A 4-hydroxyproline mark is found at Pro-338, Pro-347, Pro-353, Pro-359, Pro-368, Pro-371, Pro-380, Pro-389, Pro-395, Pro-407, Pro-416, Pro-425, Pro-428, Pro-446, Pro-468, Pro-474, Pro-480, Pro-486, Pro-492, Pro-504, Pro-513, Pro-526, Pro-532, and Pro-541. Residues 362–388 (KGLTGSPGSPGPDGKTGPPGPAGQDGR) show a composition bias toward low complexity. Residues 397-416 (ARGQAGVMGFPGPKGAAGEP) are compositionally biased toward low complexity. Low complexity predominate over residues 458–483 (QGPAPGFQGLPGPAGPPGEAGKPGEQ). Lys-553 is subject to 5-hydroxylysine. Pro-559, Pro-574, and Pro-580 each carry 4-hydroxyproline. Residues 586–600 (SGPSGPAGPTGARGA) are compositionally biased toward low complexity. Ser-589 carries the phosphoserine modification. Residues Pro-601, Pro-607, Pro-610, Pro-619, Pro-625, Pro-643, Pro-652, and Pro-661 each carry the 4-hydroxyproline modification. The segment covering 613–640 (AGFAGPPGADGQPGAKGEPGDAGAKGDA) has biased composition (low complexity). The segment covering 642-654 (PPGPAGPTGPPGP) has biased composition (pro residues). The residue at position 664 (Lys-664) is a 5-hydroxylysine. Over residues 669–685 (SAGPPGATGFPGAAGRV) the composition is skewed to low complexity. 2 positions are modified to 4-hydroxyproline: Pro-673 and Pro-679. 3-hydroxyproline is present on Pro-687. 16 positions are modified to 4-hydroxyproline: Pro-688, Pro-697, Pro-700, Pro-721, Pro-730, Pro-738, Pro-747, Pro-765, Pro-774, Pro-777, Pro-783, Pro-798, Pro-804, Pro-810, Pro-819, and Pro-825. Low complexity predominate over residues 714 to 723 (ETGPAGRPGE). Low complexity predominate over residues 735 to 747 (KGSPGADGPAGAP). Pro residues predominate over residues 797 to 807 (PPGPMGPPGLA). A compositionally biased stretch (low complexity) spans 809 to 824 (PPGESGREGSPGAEGS). Residue Lys-834 is modified to 5-hydroxylysine. Positions 843-858 (AGPPGAPGAPGAPGPV) are enriched in pro residues. 3 positions are modified to 4-hydroxyproline: Pro-846, Pro-849, and Pro-852. The segment covering 879-893 (AGPAGARGPAGPQGP) has biased composition (low complexity). The segment covering 894–905 (RGDKGETGEQGD) has biased composition (basic and acidic residues). Lys-897 is subject to 5-hydroxylysine. 4 positions are modified to 4-hydroxyproline: Pro-918, Pro-921, Pro-939, and Pro-954. Residues 921 to 954 (PGEQGPSGASGPAGPRGPPGSAGSPGKDGLNGLP) are compositionally biased toward low complexity. Pro-959 carries the 3-hydroxyproline modification. Pro-960 carries the 4-hydroxyproline modification. Positions 972 to 987 (VGPPGPPGPPGPPGPP) are enriched in pro residues. Pro-974 carries the 3-hydroxyproline modification. The residue at position 975 (Pro-975) is a 4-hydroxyproline. At Pro-977 the chain carries 3-hydroxyproline. A 4-hydroxyproline modification is found at Pro-978. Residue Pro-980 is modified to 3-hydroxyproline. 4-hydroxyproline is present on residues Pro-981, Pro-984, and Pro-987.

It belongs to the fibrillar collagen family. As to quaternary structure, trimers of one alpha 2(I) and two alpha 1(I) chains. Post-translationally, contains mostly 4-hydroxyproline. Proline residues at the third position of the tripeptide repeating unit (G-X-Y) are hydroxylated in some or all of the chains. Contains 3-hydroxyproline at a few sites. This modification occurs on the first proline residue in the sequence motif Gly-Pro-Hyp, where Hyp is 4-hydroxyproline. In terms of processing, lysine residues at the third position of the tripeptide repeating unit (G-X-Y) are 5-hydroxylated in some or all of the chains. Post-translationally, O-glycosylated on hydroxylated lysine residues. The O-linked glycan consists of a Glc-Gal disaccharide. As to expression, expressed in bones.

Its subcellular location is the secreted. The protein localises to the extracellular space. It is found in the extracellular matrix. Type I collagen is a member of group I collagen (fibrillar forming collagen). This chain is Collagen alpha-1(I) chain, found in Glossotherium robustum (Ground sloth).